The primary structure comprises 800 residues: Probable inorganic carbon transporter subunit DabA (800 aa).

Cysteine 329, aspartate 331, histidine 488, and cysteine 503 together coordinate Zn(2+).

It belongs to the inorganic carbon transporter (TC 9.A.2) DabA family. Forms a complex with DabB. Requires Zn(2+) as cofactor.

It is found in the cell inner membrane. Its function is as follows. Part of an energy-coupled inorganic carbon pump. This chain is Probable inorganic carbon transporter subunit DabA, found in Roseobacter denitrificans (strain ATCC 33942 / OCh 114) (Erythrobacter sp. (strain OCh 114)).